The sequence spans 70 residues: Small ribosomal subunit protein bS21 (70 aa).

The protein belongs to the bacterial ribosomal protein bS21 family.

The sequence is that of Small ribosomal subunit protein bS21 from Helicobacter hepaticus (strain ATCC 51449 / 3B1).